The primary structure comprises 144 residues: Leghemoglobin-1 (144 aa).

One can recognise a Globin domain in the interval 2–144 (GFTEKQEALV…DGLATAIKAA (143 aa)). Nitrated tyrosine occurs at positions 25 and 30. Ser45 contacts heme b. The residue at position 45 (Ser45) is a Phosphoserine. His62 is a binding site for O2. Lys65, His93, and Lys96 together coordinate heme b. Tyr134 bears the Nitrated tyrosine mark.

It belongs to the plant globin family. As to quaternary structure, monomer. Post-translationally, nitrated in effective nodules and particularly in hypoxic conditions; this mechanism may play a protective role in the symbiosis by buffering toxic peroxynitrite NO(2)(-). Nitration level decrease during nodule senescence. In terms of processing, phosphorylation at Ser-45 disrupts the molecular environment of its porphyrin ring oxygen binding pocket, thus leading to a reduced oxygen consumption and to the delivery of oxygen O(2) to symbiosomes. As to expression, root nodules.

It localises to the cytoplasm. The protein localises to the cytosol. The protein resides in the nucleus. In terms of biological role, leghemoglobin that reversibly binds oxygen O(2) through a pentacoordinated heme iron. In root nodules, facilitates the diffusion of oxygen to the bacteroids while preventing the bacterial nitrogenase from being inactivated by buffering dioxygen, nitric oxide and carbon monoxide, and promoting the formation of reactive oxygen species (ROS, e.g. H(2)O(2)). This role is essential for symbiotic nitrogen fixation (SNF). The protein is Leghemoglobin-1 of Vicia faba (Broad bean).